Here is a 494-residue protein sequence, read N- to C-terminus: Glutamyl-tRNA(Gln) amidotransferase subunit A (494 aa).

Catalysis depends on charge relay system residues Lys-79 and Ser-154. Ser-178 (acyl-ester intermediate) is an active-site residue.

It belongs to the amidase family. GatA subfamily. As to quaternary structure, heterotrimer of A, B and C subunits.

The enzyme catalyses L-glutamyl-tRNA(Gln) + L-glutamine + ATP + H2O = L-glutaminyl-tRNA(Gln) + L-glutamate + ADP + phosphate + H(+). Its function is as follows. Allows the formation of correctly charged Gln-tRNA(Gln) through the transamidation of misacylated Glu-tRNA(Gln) in organisms which lack glutaminyl-tRNA synthetase. The reaction takes place in the presence of glutamine and ATP through an activated gamma-phospho-Glu-tRNA(Gln). The chain is Glutamyl-tRNA(Gln) amidotransferase subunit A from Clostridium kluyveri (strain NBRC 12016).